We begin with the raw amino-acid sequence, 339 residues long: Replication factor C subunit 5 (339 aa).

59-66 (GPPGTGKT) is a binding site for ATP.

Belongs to the activator 1 small subunits family. As to quaternary structure, subunit of the RFC complex, an heteropentameric complex consisting of a large subunit RFC1 and four small subunits RFC2, RFC3, RFC4 and RFC5; the RFC complex interacts with PCNA. Forms an heterotetrameric complex with RFC2, RFC3 and RFC4; this complex has ATPase activity but is not stimulated by PCNA. The heterotetramer of subunits RFC2, RFC3, RFC4 and RFC5 interacts with RAD17.

The protein localises to the nucleus. In terms of biological role, subunit of the replication factor C (RFC) complex which acts during elongation of primed DNA templates by DNA polymerases delta and epsilon, and is necessary for ATP-dependent loading of proliferating cell nuclear antigen (PCNA) onto primed DNA. The sequence is that of Replication factor C subunit 5 (Rfc5) from Mus musculus (Mouse).